Reading from the N-terminus, the 156-residue chain is Small ribosomal subunit protein uS7 (156 aa).

It belongs to the universal ribosomal protein uS7 family. Part of the 30S ribosomal subunit. Contacts proteins S9 and S11.

Functionally, one of the primary rRNA binding proteins, it binds directly to 16S rRNA where it nucleates assembly of the head domain of the 30S subunit. Is located at the subunit interface close to the decoding center, probably blocks exit of the E-site tRNA. This chain is Small ribosomal subunit protein uS7, found in Clostridium botulinum (strain 657 / Type Ba4).